The primary structure comprises 69 residues: Large ribosomal subunit protein bL31 (69 aa).

Cys17, Cys19, Cys37, and Cys40 together coordinate Zn(2+).

This sequence belongs to the bacterial ribosomal protein bL31 family. Type A subfamily. As to quaternary structure, part of the 50S ribosomal subunit. Requires Zn(2+) as cofactor.

In terms of biological role, binds the 23S rRNA. This Clostridium botulinum (strain Eklund 17B / Type B) protein is Large ribosomal subunit protein bL31.